We begin with the raw amino-acid sequence, 226 residues long: Peptidyl-prolyl cis-trans isomerase CYP23 (226 aa).

The first 22 residues, 1–22 (MGITRNLILGLACLAFVSIAKA), serve as a signal peptide directing secretion. Residues 34-191 (VVFQTSYGDI…ERITILSTYY (158 aa)) enclose the PPIase cyclophilin-type domain.

This sequence belongs to the cyclophilin-type PPIase family. In terms of tissue distribution, ubiquitous. Lower expression in roots.

Its subcellular location is the endoplasmic reticulum. The catalysed reaction is [protein]-peptidylproline (omega=180) = [protein]-peptidylproline (omega=0). PPIases accelerate the folding of proteins. It catalyzes the cis-trans isomerization of proline imidic peptide bonds in oligopeptides. In Arabidopsis thaliana (Mouse-ear cress), this protein is Peptidyl-prolyl cis-trans isomerase CYP23 (CYP23).